Reading from the N-terminus, the 208-residue chain is MADMKRLKHLMFSPFIDNNPIALQVLGICSALAVTTKLQTAIVMGISVALVTGFSSFFISLVRNYIPNSIRIIVQMAIIASLVTLVDQLLQAFAYELSKQLSVFVGLIITNCIVMGRAEAFAMKEPPLESLIDGIGNGAGYGIMLLVVATVRELIGSGKLLGYTVFQTVQDGGWYQTNGLFLLAPSAFFIIGFLIWGLRTWKPEQAEE.

A run of 5 helical transmembrane segments spans residues 42 to 62 (IVMGISVALVTGFSSFFISLV), 72 to 92 (IIVQMAIIASLVTLVDQLLQA), 103 to 123 (VFVGLIITNCIVMGRAEAFAM), 131 to 151 (LIDGIGNGAGYGIMLLVVATV), and 178 to 198 (NGLFLLAPSAFFIIGFLIWGL).

Belongs to the NqrDE/RnfAE family. In terms of assembly, composed of six subunits; NqrA, NqrB, NqrC, NqrD, NqrE and NqrF.

The protein resides in the cell inner membrane. It carries out the reaction a ubiquinone + n Na(+)(in) + NADH + H(+) = a ubiquinol + n Na(+)(out) + NAD(+). In terms of biological role, NQR complex catalyzes the reduction of ubiquinone-1 to ubiquinol by two successive reactions, coupled with the transport of Na(+) ions from the cytoplasm to the periplasm. NqrA to NqrE are probably involved in the second step, the conversion of ubisemiquinone to ubiquinol. The chain is Na(+)-translocating NADH-quinone reductase subunit D from Neisseria meningitidis serogroup B (strain ATCC BAA-335 / MC58).